The primary structure comprises 239 residues: 2-C-methyl-D-erythritol 4-phosphate cytidylyltransferase (239 aa).

It belongs to the IspD/TarI cytidylyltransferase family. IspD subfamily.

It catalyses the reaction 2-C-methyl-D-erythritol 4-phosphate + CTP + H(+) = 4-CDP-2-C-methyl-D-erythritol + diphosphate. The protein operates within isoprenoid biosynthesis; isopentenyl diphosphate biosynthesis via DXP pathway; isopentenyl diphosphate from 1-deoxy-D-xylulose 5-phosphate: step 2/6. Catalyzes the formation of 4-diphosphocytidyl-2-C-methyl-D-erythritol from CTP and 2-C-methyl-D-erythritol 4-phosphate (MEP). The polypeptide is 2-C-methyl-D-erythritol 4-phosphate cytidylyltransferase (Ruthia magnifica subsp. Calyptogena magnifica).